Reading from the N-terminus, the 443-residue chain is Phosphatidate cytidylyltransferase 2 (443 aa).

The span at 1–38 (MTELRQRAVREDAPPEDKESESEAKLDGETASDSESRA) shows a compositional bias: basic and acidic residues. Positions 1–51 (MTELRQRAVREDAPPEDKESESEAKLDGETASDSESRAETAPPPTSIDDTP) are disordered. Residue Ser-20 is modified to Phosphoserine. Thr-30 carries the post-translational modification Phosphothreonine. A phosphoserine mark is found at Ser-32, Ser-34, and Ser-36. Residue Thr-50 is modified to Phosphothreonine. 6 helical membrane passes run 78 to 98 (MIAF…MIVM), 129 to 149 (WYFL…DYFF), 165 to 185 (HRFI…LSLV), 212 to 232 (LVIH…SCVI), 261 to 281 (GFIG…YVMS), and 338 to 358 (SALS…ASGF).

The protein belongs to the CDS family. In terms of assembly, homodimer.

Its subcellular location is the endoplasmic reticulum membrane. It carries out the reaction a 1,2-diacyl-sn-glycero-3-phosphate + CTP + H(+) = a CDP-1,2-diacyl-sn-glycerol + diphosphate. It catalyses the reaction 1-octadecanoyl-2-(5Z,8Z,11Z,14Z-eicosatetraenoyl)-sn-glycero-3-phosphate + CTP + H(+) = 1-octadecanoyl-2-(5Z,8Z,11Z,14Z-eicosatetraenoyl)-sn-glycero-3-cytidine-5'-diphosphate + diphosphate. The enzyme catalyses 1-octadecanoyl-2-(9Z,12Z-octadecadienoyl)-sn-glycero-3-phosphate + CTP + H(+) = 1-octadecanoyl-2-(9Z,12Z-octadecadienoyl)-sn-glycero-3-cytidine-5'-diphosphate + diphosphate. The catalysed reaction is 1-hexadecanoyl-2-(5Z,8Z,11Z,14Z-eicosatetraenoyl)-sn-glycero-3-phosphate + CTP + H(+) = 1-hexadecanoyl-2-(5Z,8Z,11Z,14Z-eicosatetraenoyl)-sn-glycero-3-cytidine-5'-diphosphate + diphosphate. It carries out the reaction 1,2-di-(5Z,8Z,11Z,14Z)-eicosatetraenoyl-sn-glycero-3-phosphate + CTP + H(+) = 1,2-di-(5Z,8Z,11Z,14Z-eicosatetraenoyl)-sn-glycero-3-cytidine-5'-diphosphate + diphosphate. It catalyses the reaction 1-octadecanoyl-2-(9Z-octadecenoyl)-sn-glycero-3-phosphate + CTP + H(+) = 1-octadecanoyl-2-(9Z-octadecenoyl)-sn-glycero-3-cytidine-5'-diphosphate + diphosphate. The enzyme catalyses 1-octadecanoyl-2-(4Z,7Z,10Z,13Z,16Z,19Z-docosahexaenoyl)-sn-glycero-3-phosphate + CTP + H(+) = 1-octadecanoyl-2-(4Z,7Z,10Z,13Z,16Z,19Z-docosahexaenoyl)-sn-glycero-3-cytidine-5'-diphosphate + diphosphate. The catalysed reaction is 1,2-di-(9Z,12Z-octadecadienoyl)-sn-glycero-3-phosphate + CTP + H(+) = 1,2-di-(9Z,12Z-octadecadienoyl)-sn-glycero-3-cytidine-5'-diphosphate + diphosphate. It carries out the reaction 1,2-di-(9Z-octadecenoyl)-sn-glycero-3-phosphate + CTP + H(+) = 1,2-di-(9Z-octadecenoyl)-sn-glycero-3-cytidine-5'-diphosphate + diphosphate. Its pathway is phospholipid metabolism; CDP-diacylglycerol biosynthesis; CDP-diacylglycerol from sn-glycerol 3-phosphate: step 3/3. Its function is as follows. Catalyzes the conversion of phosphatidic acid (PA) to CDP-diacylglycerol (CDP-DAG), an essential intermediate in the synthesis of phosphatidylglycerol, cardiolipin and phosphatidylinositol. Exhibits specificity for the nature of the acyl chains at the sn-1 and sn-2 positions in the substrate, PA and the preferred acyl chain composition is 1-stearoyl-2-arachidonoyl-sn-phosphatidic acid. Plays an important role in regulating the growth and maturation of lipid droplets which are storage organelles at the center of lipid and energy homeostasis. The chain is Phosphatidate cytidylyltransferase 2 from Rattus norvegicus (Rat).